Here is a 275-residue protein sequence, read N- to C-terminus: Lincomycin biosynthesis protein LmbN (275 aa).

Residues 1–78 (MSTLDEVLAL…AIAATVARIT (78 aa)) enclose the Carrier domain. O-(pantetheine 4'-phosphoryl)serine is present on serine 37. One can recognise an SIS domain in the interval 113–275 (LFDTWHAGGT…HHALCVAHAP (163 aa)).

It participates in antibiotic biosynthesis; lincomycin biosynthesis. This chain is Lincomycin biosynthesis protein LmbN (lmbN), found in Streptomyces lincolnensis.